The primary structure comprises 171 residues: Co-chaperone protein HscB (171 aa).

Residues 2–74 enclose the J domain; sequence DYFTLFGLPA…LARAEYLLSL (73 aa).

This sequence belongs to the HscB family. Interacts with HscA and stimulates its ATPase activity. Interacts with IscU.

Its function is as follows. Co-chaperone involved in the maturation of iron-sulfur cluster-containing proteins. Seems to help targeting proteins to be folded toward HscA. The protein is Co-chaperone protein HscB of Enterobacter sp. (strain 638).